Consider the following 400-residue polypeptide: NAD-dependent protein deacetylase sirtuin-7 (400 aa).

Positions 1–27 (MAAGGLSRSERKAAERVRRLREEQQRE) are disordered. The span at 8–27 (RSERKAAERVRRLREEQQRE) shows a compositional bias: basic and acidic residues. Positions 82 to 329 (PEELRGKVRE…RLLMAELGLE (248 aa)) constitute a Deacetylase sirtuin-type domain. Residues 107–126 (GAGISTAASIPDYRGPNGVW) and 167–170 (QNCD) each bind NAD(+). His187 functions as the Proton acceptor in the catalytic mechanism. Residues Cys195, Cys198, Cys225, and Cys228 each contribute to the Zn(2+) site. Residues 268–270 (GSS), 297–299 (NLQ), and Cys315 each bind NAD(+). Residues 354–380 (SHSRKSLCRSREEAPPGDRGAPLSSAP) are disordered. Residue Arg388 is modified to Asymmetric dimethylarginine; alternate. Arg388 carries the omega-N-methylarginine; alternate modification.

The protein belongs to the sirtuin family. Class IV subfamily. As to quaternary structure, interacts with UBTF and the RNA polymerase I complex. Interacts with components of the B-WICH complex, such as MYBBP1A, SMARCA5/SNF2H and BAZ1B/WSTF. Interacts with ELK4, leading to stabilization at target promoters for H3K18Ac deacetylation. Interacts with histone H2A and/or histone H2B. Interacts with DNMT1. Interacts with SIRT1. Zn(2+) serves as cofactor. In terms of processing, phosphorylated during mitosis. Post-translationally, methylation at Arg-388 by PRMT6 inhibits the H3K18Ac histone deacetylase activity, promoting mitochondria biogenesis and maintaining mitochondria respiration. Ubiquitinated via 'Lys-63'-linked ubiquitin chains. Deubiquitinated by USP7, inhibiting the H3K18Ac histone deacetylase activity and regulating gluconeogenesis. Ubiquitinated by E3 ubiquitin-protein ligase complex containing FBXO7; leading to proteasomal degradation.

The protein resides in the nucleus. The protein localises to the nucleolus. It is found in the nucleoplasm. Its subcellular location is the chromosome. It localises to the cytoplasm. It carries out the reaction N(6)-acetyl-L-lysyl-[protein] + NAD(+) + H2O = 2''-O-acetyl-ADP-D-ribose + nicotinamide + L-lysyl-[protein]. The enzyme catalyses N(6)-glutaryl-L-lysyl-[protein] + NAD(+) + H2O = 2''-O-glutaryl-ADP-D-ribose + nicotinamide + L-lysyl-[protein]. It catalyses the reaction N(6)-succinyl-L-lysyl-[protein] + NAD(+) + H2O = 2''-O-succinyl-ADP-D-ribose + nicotinamide + L-lysyl-[protein]. The catalysed reaction is N(6)-propanoyl-L-lysyl-[protein] + NAD(+) + H2O = 3''-O-propanoyl-ADP-D-ribose + nicotinamide + L-lysyl-[protein]. It carries out the reaction N(6)-decanoyl-L-lysyl-[protein] + NAD(+) + H2O = 2''-O-decanoyl-ADP-D-ribose + nicotinamide + L-lysyl-[protein]. NAD-dependent protein-lysine deacetylase and deacylase activities are activated by nucleic acids. Histone deacetylase activity is activated by DNA and nucleosomes. Protein-lysine deacylase activity is activated by RNA. H3K18Ac histone deacetylase activity is inhibited by methylation at Arg-388. H3K18Ac histone deacetylase activity is inhibited by deubiquitination by USP7. Functionally, NAD-dependent protein-lysine deacylase that can act both as a deacetylase or deacylase (desuccinylase, depropionylase, deglutarylase and dedecanoylase), depending on the context. Specifically mediates deacetylation of histone H3 at 'Lys-18' (H3K18Ac). In contrast to other histone deacetylases, displays strong preference for a specific histone mark, H3K18Ac, directly linked to control of gene expression. H3K18Ac is mainly present around the transcription start site of genes and has been linked to activation of nuclear hormone receptors; SIRT7 thereby acts as a transcription repressor. Moreover, H3K18 hypoacetylation has been reported as a marker of malignancy in various cancers and seems to maintain the transformed phenotype of cancer cells. Also able to mediate deacetylation of histone H3 at 'Lys-36' (H3K36Ac) in the context of nucleosomes. Also mediates deacetylation of non-histone proteins, such as ATM, CDK9, DDX21, DDB1, FBL, FKBP5/FKBP51, GABPB1, RAN, RRP9/U3-55K and POLR1E/PAF53. Enriched in nucleolus where it stimulates transcription activity of the RNA polymerase I complex. Acts by mediating the deacetylation of the RNA polymerase I subunit POLR1E/PAF53, thereby promoting the association of RNA polymerase I with the rDNA promoter region and coding region. In response to metabolic stress, SIRT7 is released from nucleoli leading to hyperacetylation of POLR1E/PAF53 and decreased RNA polymerase I transcription. Required to restore the transcription of ribosomal RNA (rRNA) at the exit from mitosis. Promotes pre-ribosomal RNA (pre-rRNA) cleavage at the 5'-terminal processing site by mediating deacetylation of RRP9/U3-55K, a core subunit of the U3 snoRNP complex. Mediates 'Lys-37' deacetylation of Ran, thereby regulating the nuclear export of NF-kappa-B subunit RELA/p65. Acts as a regulator of DNA damage repair by mediating deacetylation of ATM during the late stages of DNA damage response, promoting ATM dephosphorylation and deactivation. Suppresses the activity of the DCX (DDB1-CUL4-X-box) E3 ubiquitin-protein ligase complexes by mediating deacetylation of DDB1, which prevents the interaction between DDB1 and CUL4 (CUL4A or CUL4B). Activates RNA polymerase II transcription by mediating deacetylation of CDK9, thereby promoting 'Ser-2' phosphorylation of the C-terminal domain (CTD) of RNA polymerase II. Deacetylates FBL, promoting histone-glutamine methyltransferase activity of FBL. Acts as a regulator of mitochondrial function by catalyzing deacetylation of GABPB1. Regulates Akt/AKT1 activity by mediating deacetylation of FKBP5/FKBP51. Required to prevent R-loop-associated DNA damage and transcription-associated genomic instability by mediating deacetylation and subsequent activation of DDX21, thereby overcoming R-loop-mediated stalling of RNA polymerases. In addition to protein deacetylase activity, also acts as a protein-lysine deacylase. Acts as a protein depropionylase by mediating depropionylation of Osterix (SP7), thereby regulating bone formation by osteoblasts. Acts as a histone deglutarylase by mediating deglutarylation of histone H4 on 'Lys-91' (H4K91glu); a mark that destabilizes nucleosomes by promoting dissociation of the H2A-H2B dimers from nucleosomes. Acts as a histone desuccinylase: in response to DNA damage, recruited to DNA double-strand breaks (DSBs) and catalyzes desuccinylation of histone H3 on 'Lys-122' (H3K122succ), thereby promoting chromatin condensation and DSB repair. Also promotes DSB repair by promoting H3K18Ac deacetylation, regulating non-homologous end joining (NHEJ). Along with its role in DNA repair, required for chromosome synapsis during prophase I of female meiosis by catalyzing H3K18Ac deacetylation. Involved in transcriptional repression of LINE-1 retrotransposon via H3K18Ac deacetylation, and promotes their association with the nuclear lamina. Required to stabilize ribosomal DNA (rDNA) heterochromatin and prevent cellular senescence induced by rDNA instability. Acts as a negative regulator of SIRT1 by preventing autodeacetylation of SIRT1, restricting SIRT1 deacetylase activity. This Homo sapiens (Human) protein is NAD-dependent protein deacetylase sirtuin-7.